A 145-amino-acid chain; its full sequence is Angiogenin (145 aa).

Positions 1-24 (MAISPGPLFLIFVLGLVVIPPTLA) are cleaved as a signal peptide. A Pyrrolidone carboxylic acid modification is found at Q25. H37 functions as the Proton acceptor in the catalytic mechanism. Positions 45 and 46 each coordinate tRNA. 3 disulfide bridges follow: C50–C104, C63–C115, and C81–C130. A Nucleolar localization signal motif is present at residues 55-59 (KRRSL). TRNA-binding residues include C104 and V126. The active-site Proton donor is the H137.

Belongs to the pancreatic ribonuclease family. As to quaternary structure, homodimer. Interacts with RNH1; inhibiting ANG ribonuclease activity. Interacts with PCNA.

The protein resides in the secreted. Its subcellular location is the nucleus. It localises to the nucleolus. It is found in the cytoplasm. The protein localises to the stress granule. With respect to regulation, has weak tRNA ribonuclease activity by itself due to partial autoinhibition by its C-terminus (residues 139-145), which folds into a short alpha-helix that partially occludes the substrate-binding site. In absence of stress, the ribonuclease activity is inhibited by RNH1 in the cytoplasm. In response to stress, dissociates from RNH1 in the cytoplasm and associates with cytoplasmic ribosomes with vacant A-sites: ribosomes directly activate the tRNA ribonuclease activity of ANG by refolding the C-terminal alpha-helix. In response to stress, the angiogenic activity of ANG is inhibited by RNH1 in the nucleus. Secreted ribonuclease that can either promote or restrict cell proliferation of target cells, depending on the context. Endocytosed in target cells via its receptor PLXNB2 and translocates to the cytoplasm or nucleus. Under stress conditions, localizes to the cytoplasm and promotes the assembly of stress granules (SGs): specifically cleaves a subset of tRNAs within anticodon loops to produce tRNA-derived stress-induced fragments (tiRNAs), resulting in translation repression and inhibition of cell proliferation. tiRNas also prevent formation of apoptosome, thereby promoting cell survival. Preferentially cleaves RNAs between a pyrimidine and an adenosine residue, suggesting that it cleaves the anticodon loop of tRNA(Ala) (32-UUAGCAU-38) after positions 33 and 36. Cleaves a subset of tRNAs, including tRNA(Ala), tRNA(Glu), tRNA(Gly), tRNA(Lys), tRNA(Val), tRNA(His), tRNA(Asp) and tRNA(Sec). Under growth conditions and in differentiated cells, translocates to the nucleus and stimulates ribosomal RNA (rRNA) transcription, including that containing the initiation site sequences of 45S rRNA, thereby promoting cell growth and proliferation. Angiogenin induces vascularization of normal and malignant tissues via its ability to promote rRNA transcription. Involved in hematopoietic stem and progenitor cell (HSPC) growth and survival by promoting rRNA transcription in growth conditions and inhibiting translation in response to stress, respectively. Mediates the crosstalk between myeloid and intestinal epithelial cells to protect the intestinal epithelial barrier integrity: secreted by myeloid cells and promotes intestinal epithelial cells proliferation and survival. Also mediates osteoclast-endothelial cell crosstalk in growing bone: produced by osteoclasts and protects the neighboring vascular cells against senescence by promoting rRNA transcription. The protein is Angiogenin of Mus musculus (Mouse).